A 602-amino-acid chain; its full sequence is Fructan 1-exohydrolase (602 aa).

Positions 1–19 are cleaved as a signal peptide; the sequence is MAQAWAFLLLPVLLLSSYA. Asp81 is an active-site residue. N-linked (GlcNAc...) asparagine glycosylation is found at Asn174, Asn242, and Asn254. Cys452 and Cys498 form a disulfide bridge.

This sequence belongs to the glycosyl hydrolase 32 family. Detected in leaves, with maximum levels at the leaf tip.

It carries out the reaction Hydrolysis of terminal, non-reducing (2-&gt;1)-linked beta-D-fructofuranose residues in fructans.. With respect to regulation, inhibited by sucrose. Hydrolyzes inulin-type beta-(2,1)-fructans. Has low activity against beta-(2,6)-linked fructans. May play a role as a beta-(2,1)-trimmer during graminan biosynthesis. In Bromus pictus (Patagonian grass), this protein is Fructan 1-exohydrolase.